We begin with the raw amino-acid sequence, 479 residues long: Ubiquinone biosynthesis monooxygenase COQ6, mitochondrial (479 aa).

The transit peptide at 1 to 17 (MFFSKVMLTRRILVRGL) directs the protein to the mitochondrion.

It belongs to the UbiH/COQ6 family. As to quaternary structure, component of a multi-subunit COQ enzyme complex, composed of at least COQ3, COQ4, COQ5, COQ6, COQ7 and COQ9. Requires FAD as cofactor.

Its subcellular location is the mitochondrion inner membrane. The enzyme catalyses 4-hydroxy-3-(all-trans-hexaprenyl)benzoate + 2 reduced [2Fe-2S]-[ferredoxin] + O2 + 2 H(+) = 3,4-dihydroxy-5-(all-trans-hexaprenyl)benzoate + 2 oxidized [2Fe-2S]-[ferredoxin] + H2O. The catalysed reaction is 2-methoxy-6-(all-trans-hexaprenyl)phenol + 2 reduced [2Fe-2S]-[ferredoxin] + O2 + 2 H(+) = 2-methoxy-6-(all-trans-hexaprenyl)benzene-1,4-diol + 2 oxidized [2Fe-2S]-[ferredoxin] + H2O. It catalyses the reaction 4-amino-3-(all-trans-hexaprenyl)benzoate + 2 reduced [2Fe-2S]-[ferredoxin] + O2 + 2 H(+) = 4-amino-5-hydroxy-3-(all-trans-hexaprenyl)benzoate + 2 oxidized [2Fe-2S]-[ferredoxin] + H2O. It carries out the reaction 4-amino-5-hydroxy-3-(all-trans-hexaprenyl)benzoate + 4 reduced [2Fe-2S]-[ferredoxin] + O2 + 5 H(+) = 3,4-dihydroxy-5-(all-trans-hexaprenyl)benzoate + 4 oxidized [2Fe-2S]-[ferredoxin] + NH4(+) + H2O. Its pathway is cofactor biosynthesis; ubiquinone biosynthesis. Functionally, FAD-dependent monooxygenase required for two non-consecutive steps during ubiquinone biosynthesis. Required for the C5-ring hydroxylation during ubiquinone biosynthesis by catalyzing the hydroxylation of 4-hydroxy-3-(all-trans-hexaprenyl)benzoic acid to 3,4-dihydroxy-5-(all-trans-hexaprenyl)benzoic acid. Also acts downstream of COQ4, for the C1-hydroxylation during ubiquinone biosynthesis by catalyzing the hydroxylation of 2-methoxy-6-(all-trans-hexaprenyl)phenol to 2-methoxy-6-(all-trans-hexaprenyl)benzene-1,4-diol. The electrons required for the hydroxylation reaction are funneled indirectly from NADPH via ferredoxin (YAH1) and ferredoxin reductase (ARH1) to COQ6. Can also convert 3-hexaprenyl-4-aminobenzoic acid (HAB), a COQ2-prenylated pABA, to DHHB in a two step process. HAB is first hydroxylated at C5 to yield 3-hexaprenyl-4-amino-5-hydroxybenzoic acid (HHAB) which is further deaminated at C4 by COQ6 to produce DHHB. The sequence is that of Ubiquinone biosynthesis monooxygenase COQ6, mitochondrial from Saccharomyces cerevisiae (strain ATCC 204508 / S288c) (Baker's yeast).